The sequence spans 187 residues: Peptidyl-tRNA hydrolase (187 aa).

Tyrosine 15 is a binding site for tRNA. Catalysis depends on histidine 20, which acts as the Proton acceptor. TRNA contacts are provided by phenylalanine 64, asparagine 66, and asparagine 112.

The protein belongs to the PTH family. As to quaternary structure, monomer.

It localises to the cytoplasm. The enzyme catalyses an N-acyl-L-alpha-aminoacyl-tRNA + H2O = an N-acyl-L-amino acid + a tRNA + H(+). Functionally, hydrolyzes ribosome-free peptidyl-tRNAs (with 1 or more amino acids incorporated), which drop off the ribosome during protein synthesis, or as a result of ribosome stalling. Catalyzes the release of premature peptidyl moieties from peptidyl-tRNA molecules trapped in stalled 50S ribosomal subunits, and thus maintains levels of free tRNAs and 50S ribosomes. The sequence is that of Peptidyl-tRNA hydrolase from Bacteroides fragilis (strain ATCC 25285 / DSM 2151 / CCUG 4856 / JCM 11019 / LMG 10263 / NCTC 9343 / Onslow / VPI 2553 / EN-2).